The chain runs to 243 residues: Ribosomal RNA small subunit methyltransferase J (243 aa).

S-adenosyl-L-methionine is bound by residues 112–113 and Asp164; that span reads ER.

This sequence belongs to the methyltransferase superfamily. RsmJ family.

The protein localises to the cytoplasm. It catalyses the reaction guanosine(1516) in 16S rRNA + S-adenosyl-L-methionine = N(2)-methylguanosine(1516) in 16S rRNA + S-adenosyl-L-homocysteine + H(+). Specifically methylates the guanosine in position 1516 of 16S rRNA. This Legionella pneumophila (strain Paris) protein is Ribosomal RNA small subunit methyltransferase J.